The sequence spans 90 residues: Small ribosomal subunit protein uS15c (90 aa).

Belongs to the universal ribosomal protein uS15 family. Part of the 30S ribosomal subunit.

The protein resides in the plastid. It localises to the chloroplast. The chain is Small ribosomal subunit protein uS15c (rps15) from Mesostigma viride (Green alga).